We begin with the raw amino-acid sequence, 69 residues long: Alpha-conotoxin SrIA/SrIB (69 aa).

Residues 1 to 21 (MGMRMMFTVFLLVVLATTVVS) form the signal peptide. Positions 22 to 48 (FTSDSAFDSRNVAANDKVSDMIALTAR) are excised as a propeptide. 2 cysteine pairs are disulfide-bonded: C51–C57 and C52–C65. A ser-Xaa-Pro motif, crucial for potent interaction with nAChR region spans residues 53–55 (SRP). P55 bears the 4-hydroxyproline; in form Sr1A and Sr1B mark. 4-carboxyglutamate; in form Sr1A is present on E60. E63 bears the 4-carboxyglutamate; in form Sr1A and Sr1B mark. G66 carries the post-translational modification Glycine amide; in form Sr1A and Sr1B.

Belongs to the conotoxin A superfamily. Post-translationally, occurs in 2 forms which differ in the post-translational modification of Glu-60. In form SrA1 Glu-60 is 4-carboxyglutamate while in form SrA2 Glu-60 is unmodified. In terms of tissue distribution, expressed by the venom duct.

The protein localises to the secreted. Alpha-conotoxins act on postsynaptic membranes, they bind to the nicotinic acetylcholine receptors (nAChR) and thus inhibit them. Has weak blocking effects on muscle nAChR composed of alpha-1/beta-1/gamma/delta subunits and the central nervous system nAChR composed of alpha-4/beta-2 subunits. Does not detectably affect the peripheral nervous system nAChR composed of alpha-3/beta-4 subunits. Low toxin concentrations potentiate currents in muscle nAChR composed of alpha-1/beta-1/gamma/delta subunits and central nervous system nAChR composed of alpha-4/beta-2 subunits, but not the peripheral nervous system nAChR composed of alpha-3/beta-4 subunits. This chain is Alpha-conotoxin SrIA/SrIB, found in Conus spurius (Alphabet cone).